A 188-amino-acid polypeptide reads, in one-letter code: Pyridoxal 5'-phosphate synthase subunit PdxT (188 aa).

An L-glutamine-binding site is contributed by 47–49 (GES). The Nucleophile role is filled by Cys-79. L-glutamine is bound by residues Arg-106 and 134–135 (IR). Catalysis depends on charge relay system residues His-169 and Glu-171.

It belongs to the glutaminase PdxT/SNO family. In terms of assembly, in the presence of PdxS, forms a dodecamer of heterodimers. Only shows activity in the heterodimer.

The enzyme catalyses aldehydo-D-ribose 5-phosphate + D-glyceraldehyde 3-phosphate + L-glutamine = pyridoxal 5'-phosphate + L-glutamate + phosphate + 3 H2O + H(+). The catalysed reaction is L-glutamine + H2O = L-glutamate + NH4(+). It participates in cofactor biosynthesis; pyridoxal 5'-phosphate biosynthesis. Functionally, catalyzes the hydrolysis of glutamine to glutamate and ammonia as part of the biosynthesis of pyridoxal 5'-phosphate. The resulting ammonia molecule is channeled to the active site of PdxS. This Caldicellulosiruptor saccharolyticus (strain ATCC 43494 / DSM 8903 / Tp8T 6331) protein is Pyridoxal 5'-phosphate synthase subunit PdxT.